Consider the following 122-residue polypeptide: Large ribosomal subunit protein uL14 (122 aa).

Belongs to the universal ribosomal protein uL14 family. In terms of assembly, part of the 50S ribosomal subunit. Forms a cluster with proteins L3 and L19. In the 70S ribosome, L14 and L19 interact and together make contacts with the 16S rRNA in bridges B5 and B8.

Functionally, binds to 23S rRNA. Forms part of two intersubunit bridges in the 70S ribosome. The chain is Large ribosomal subunit protein uL14 from Myxococcus xanthus (strain DK1622).